Here is a 462-residue protein sequence, read N- to C-terminus: U2 small nuclear ribonucleoprotein auxiliary factor 35 kDa subunit-related protein 2 (462 aa).

Low complexity predominate over residues 1 to 13 (METAGATADATAG). Disordered regions lie at residues 1 to 22 (META…RKKY), 44 to 66 (AELA…EEER), and 115 to 138 (WEEQ…EREE). A Glycyl lysine isopeptide (Lys-Gly) (interchain with G-Cter in SUMO2) cross-link involves residue Lys49. Residues 57–66 (AEEKRLEEER) show a composition bias toward basic and acidic residues. The C3H1-type 1 zinc finger occupies 170 to 198 (EKDRANCPFYSKTGACRFGDRCSRKHNFP). One can recognise an RRM domain in the interval 202–308 (PTLLIKGMFT…RQLQCEFCPV (107 aa)). A C3H1-type 2 zinc finger spans residues 310–337 (RWKMAICGLFEVQQCPRGKHCNFLHVFR). The residue at position 353 (Ser353) is a Phosphoserine. The interval 354–462 (PDWTSSSFGK…QPQPQPQSDP (109 aa)) is disordered. Positions 364–379 (NSERRERASHYDEYYG) are enriched in basic and acidic residues. Ser389 is subject to Phosphoserine. A compositionally biased stretch (basic and acidic residues) spans 392-403 (FYKRNGESDRKS). Basic residues predominate over residues 404–417 (SSRHRVKKSHRYGM).

In terms of assembly, component of the U11/U12 snRNPs that are part of the U12-type spliceosome. Interacts (via RS domain) with SRSF1 and SRSF2. Interacts with U2AF2/U2AF65. Post-translationally, phosphorylated in the RS domain by SRPK1.

The protein localises to the nucleus. Functionally, pre-mRNA-binding protein required for splicing of both U2- and U12-type introns. Selectively interacts with the 3'-splice site of U2- and U12-type pre-mRNAs and promotes different steps in U2 and U12 intron splicing. Recruited to U12 pre-mRNAs in an ATP-dependent manner and is required for assembly of the prespliceosome, a precursor to other spliceosomal complexes. For U2-type introns, it is selectively and specifically required for the second step of splicing. The sequence is that of U2 small nuclear ribonucleoprotein auxiliary factor 35 kDa subunit-related protein 2 (Zrsr2) from Mus musculus (Mouse).